The sequence spans 228 residues: L-ribulose-5-phosphate 4-epimerase UlaF (228 aa).

Residues 26 to 27 (GN), 43 to 44 (SG), and 72 to 73 (SS) contribute to the substrate site. The Zn(2+) site is built by Asp74, His93, and His95. Asp118 acts as the Proton donor/acceptor in catalysis. Zn(2+) is bound at residue His167. Tyr225 serves as the catalytic Proton donor/acceptor.

The protein belongs to the aldolase class II family. AraD/FucA subfamily. Requires Zn(2+) as cofactor.

The catalysed reaction is L-ribulose 5-phosphate = D-xylulose 5-phosphate. It functions in the pathway cofactor degradation; L-ascorbate degradation; D-xylulose 5-phosphate from L-ascorbate: step 4/4. Catalyzes the isomerization of L-ribulose 5-phosphate to D-xylulose 5-phosphate. Is involved in the anaerobic L-ascorbate utilization. The sequence is that of L-ribulose-5-phosphate 4-epimerase UlaF from Escherichia coli (strain SMS-3-5 / SECEC).